The sequence spans 299 residues: MLRRGFIKQPPFVKIFKIVSPESTNAKATHCEVEFPLKVQELWRDKHHVIFNKPPLALSQLPDKRTWYNTHDYDPPVLLDIVQSSSGSILKDGTYEPSYYPIHRIDTPVSGGIVYAVNKQSAQQFSRNLRYGGNKGFSLTRKYVAKVGKSKTANECKEGLIKWNGAITYFQRVDNEHLILQLVTGKKHQIRKLTQQVLDSPIYNDLKYGGKKVFDSDFQIALHSAYIRTKIGFNIHEQIIPVPDGFRMIWGESVDQNGNFNEDITRVLKEDWAGTIKECLKKLKIQETKLADNQLIFVS.

Asp106 is an active-site residue.

It belongs to the pseudouridine synthase RluA family.

The protein localises to the mitochondrion. The catalysed reaction is uridine(2819) in 21S rRNA = pseudouridine(2819) in 21S rRNA. Its function is as follows. Pseudouridylate synthase responsible for the pseudouridine-2819 formation in mitochondrial 21S rRNA. May modulate the efficiency or the fidelity of the mitochondrial translation machinery. The polypeptide is 21S rRNA pseudouridine(2819) synthase (PUS5) (Kluyveromyces lactis (strain ATCC 8585 / CBS 2359 / DSM 70799 / NBRC 1267 / NRRL Y-1140 / WM37) (Yeast)).